A 220-amino-acid polypeptide reads, in one-letter code: Adapter protein MecA (220 aa).

Belongs to the MecA family. As to quaternary structure, homodimer.

In terms of biological role, enables the recognition and targeting of unfolded and aggregated proteins to the ClpC protease or to other proteins involved in proteolysis. In Enterococcus faecalis (strain ATCC 700802 / V583), this protein is Adapter protein MecA.